Consider the following 221-residue polypeptide: 2,3-bisphosphoglycerate-dependent phosphoglycerate mutase (221 aa).

Residues 8–15 (RHGNSLWN), 21–22 (TG), arginine 60, 87–90 (ERHY), lysine 98, 114–115 (RR), and 174–175 (GN) each bind substrate. Histidine 9 acts as the Tele-phosphohistidine intermediate in catalysis. The active-site Proton donor/acceptor is the glutamate 87. The segment at 114–140 (RRGYDTPPPPLHSQADDPRYEEPPPLS) is disordered.

Belongs to the phosphoglycerate mutase family. BPG-dependent PGAM subfamily.

The catalysed reaction is (2R)-2-phosphoglycerate = (2R)-3-phosphoglycerate. It functions in the pathway carbohydrate degradation; glycolysis; pyruvate from D-glyceraldehyde 3-phosphate: step 3/5. Catalyzes the interconversion of 2-phosphoglycerate and 3-phosphoglycerate. The protein is 2,3-bisphosphoglycerate-dependent phosphoglycerate mutase of Tropheryma whipplei (strain TW08/27) (Whipple's bacillus).